The primary structure comprises 270 residues: Sorting nexin-11 (270 aa).

The region spanning 16–132 (VITVRVQDPR…HLFLQSQLSV (117 aa)) is the PX domain. A 1,2-diacyl-sn-glycero-3-phospho-(1D-myo-inositol-3-phosphate) contacts are provided by R59, K85, and R99. The important for membrane trafficking stretch occupies residues 135-139 (IEACV). Residues 168–177 (GSSHLAEGDQ) are compositionally biased toward basic and acidic residues. Disordered stretches follow at residues 168–244 (GSSH…LSAS) and 251–270 (LGGG…VLEK). Positions 218–227 (LESPTLPPTS) are enriched in pro residues.

It belongs to the sorting nexin family. As to quaternary structure, monomer. Interacts with TRPV3; this interaction promotes TRPV3 trafficking from the cell membrane to lysosome for degradation.

Its subcellular location is the cell membrane. It is found in the endosome. It localises to the cytoplasm. Its function is as follows. Phosphoinositide-binding protein involved in protein sorting and membrane trafficking in endosomes. Regulates the levels of TRPV3 by promoting its trafficking from the cell membrane to lysosome for degradation. This is Sorting nexin-11 (SNX11) from Bos taurus (Bovine).